The primary structure comprises 127 residues: Protein LLP homolog (127 aa).

Residues 1–21 (MAKSLRSKWKRKMRAEKRKKN) show a composition bias toward basic residues. Positions 1-24 (MAKSLRSKWKRKMRAEKRKKNAPK) are disordered. Glycyl lysine isopeptide (Lys-Gly) (interchain with G-Cter in SUMO2) cross-links involve residues K65 and K72. Over residues 98–120 (RQRKRLKAKRERKKGKSKVKAMK) the composition is skewed to basic residues. The disordered stretch occupies residues 98 to 127 (RQRKRLKAKRERKKGKSKVKAMKAAKGLTW).

Belongs to the learning-associated protein family. Interacts with CTCF, MYO1C and with the transcriptional machinery, including RNA polymerase II and TBP.

Its subcellular location is the nucleus. The protein localises to the nucleolus. It localises to the chromosome. In hippocampal neurons, regulates dendritic and spine growth and synaptic transmission. This Bos taurus (Bovine) protein is Protein LLP homolog (LLPH).